We begin with the raw amino-acid sequence, 139 residues long: Type II methyltransferase M.AquIB (139 aa).

The 135-residue stretch at 1 to 135 (MDIKNVHIKN…KAVSEQLLDV (135 aa)) folds into the SAM-dependent MTase C5-type domain. The disordered stretch occupies residues 38–58 (KTFGSTYRRLDPNQPSPTVTR).

The protein belongs to the class I-like SAM-binding methyltransferase superfamily. C5-methyltransferase family. Heterodimer of an alpha and a beta subunit.

It carries out the reaction a 2'-deoxycytidine in DNA + S-adenosyl-L-methionine = a 5-methyl-2'-deoxycytidine in DNA + S-adenosyl-L-homocysteine + H(+). Its function is as follows. A methylase, recognizes the double-stranded sequence 5'-CYCGRG-3', methylates C-1 on both strands, and protects the DNA from cleavage by the AquI endonuclease. The protein is Type II methyltransferase M.AquIB (aquIMB) of Picosynechococcus sp. (strain ATCC 27264 / PCC 7002 / PR-6) (Agmenellum quadruplicatum).